The primary structure comprises 389 residues: Metal tolerance protein 2 (389 aa).

Over 1-81 (MGFRLAHLAA…GGEASERIFR (81 aa)) the chain is Cytoplasmic. The helical transmembrane segment at 82–102 (LGLAADVVLTVGKAVTGYLSG) threads the bilayer. Over 103 to 104 (ST) the chain is Vacuolar. A helical transmembrane segment spans residues 105 to 125 (AIAADAAHSLSDIVLSGVALL). Topologically, residues 126–148 (SYKAAKAPRDKEHPYGHGKFESL) are cytoplasmic. The chain crosses the membrane as a helical span at residues 149 to 169 (GALGISSMLLVTAGGIAWHAF). The Vacuolar portion of the chain corresponds to 170–206 (DVLQGVMSSAPDIIGNVSHAHHSHGSSGHHHGIDLEH). Residues 207-227 (PILALSVTAFAISVKEGLYWI) form a helical membrane-spanning segment. The Cytoplasmic portion of the chain corresponds to 228 to 250 (TKRAGEKEGSGLMKANAWHHRSD). The helical transmembrane segment at 251–271 (AISSVVALLGVGGSILGVPYL) threads the bilayer. The Vacuolar portion of the chain corresponds to 272–275 (DPLA). A helical transmembrane segment spans residues 276 to 296 (GLVVSGMILKAGVHTGYESVL). At 297–389 (ELVDAAVDPS…SLQPLNQNAL (93 aa)) the chain is on the cytoplasmic side.

Belongs to the cation diffusion facilitator (CDF) transporter (TC 2.A.4) family. SLC30A subfamily.

It localises to the vacuole membrane. Its function is as follows. Involved in sequestration of excess metal in the cytoplasm into vacuoles to maintain metal homeostasis. The sequence is that of Metal tolerance protein 2 (MTP2) from Oryza sativa subsp. japonica (Rice).